The primary structure comprises 668 residues: DNA mismatch repair protein MutL (668 aa).

Residues 437-459 (TYQSQYSETGSHSQETLPLSEQK) form a disordered region. Over residues 438-459 (YQSQYSETGSHSQETLPLSEQK) the composition is skewed to polar residues.

It belongs to the DNA mismatch repair MutL/HexB family.

Its function is as follows. This protein is involved in the repair of mismatches in DNA. It is required for dam-dependent methyl-directed DNA mismatch repair. May act as a 'molecular matchmaker', a protein that promotes the formation of a stable complex between two or more DNA-binding proteins in an ATP-dependent manner without itself being part of a final effector complex. In Leuconostoc citreum (strain KM20), this protein is DNA mismatch repair protein MutL.